A 196-amino-acid polypeptide reads, in one-letter code: Imidazole glycerol phosphate synthase subunit HisH (196 aa).

The Glutamine amidotransferase type-1 domain maps to 2 to 196 (KVAVIKYNAG…ERIIKNFLEL (195 aa)). The active-site Nucleophile is C77. Catalysis depends on residues H178 and E180.

As to quaternary structure, heterodimer of HisH and HisF.

The protein localises to the cytoplasm. It catalyses the reaction 5-[(5-phospho-1-deoxy-D-ribulos-1-ylimino)methylamino]-1-(5-phospho-beta-D-ribosyl)imidazole-4-carboxamide + L-glutamine = D-erythro-1-(imidazol-4-yl)glycerol 3-phosphate + 5-amino-1-(5-phospho-beta-D-ribosyl)imidazole-4-carboxamide + L-glutamate + H(+). The enzyme catalyses L-glutamine + H2O = L-glutamate + NH4(+). Its pathway is amino-acid biosynthesis; L-histidine biosynthesis; L-histidine from 5-phospho-alpha-D-ribose 1-diphosphate: step 5/9. Its function is as follows. IGPS catalyzes the conversion of PRFAR and glutamine to IGP, AICAR and glutamate. The HisH subunit catalyzes the hydrolysis of glutamine to glutamate and ammonia as part of the synthesis of IGP and AICAR. The resulting ammonia molecule is channeled to the active site of HisF. The chain is Imidazole glycerol phosphate synthase subunit HisH from Bacteroides fragilis (strain ATCC 25285 / DSM 2151 / CCUG 4856 / JCM 11019 / LMG 10263 / NCTC 9343 / Onslow / VPI 2553 / EN-2).